The chain runs to 757 residues: RNA-directed RNA polymerase catalytic subunit (757 aa).

Residues 50-82 form a disordered region; that stretch reads SEKGKWTTNTETGAPQLNPIDGPLPEDNEPSGY. Over residues 55–64 the composition is skewed to polar residues; it reads WTTNTETGAP. 2 consecutive short sequence motifs (nuclear localization signal) follow at residues 187 to 195 and 203 to 216; these read RKRRVRDNM and RTIGKKKQRLNKRS. Residues 249–256 form a promoter-binding site region; the sequence is RGFVYFVE. The RdRp catalytic domain occupies 286-483; that stretch reads VRKMMTNSQD…GINMSKKKSY (198 aa).

It belongs to the influenza viruses polymerase PB1 family. As to quaternary structure, influenza RNA polymerase is composed of three subunits: PB1, PB2 and PA. Interacts (via N-terminus) with PA (via C-terminus). Interacts (via C-terminus) with PB2 (via N-terminus); this interaction is essential for transcription initiation. In terms of processing, phosphorylated by host PRKCA.

Its subcellular location is the host nucleus. The protein localises to the host cytoplasm. The enzyme catalyses RNA(n) + a ribonucleoside 5'-triphosphate = RNA(n+1) + diphosphate. Functionally, RNA-dependent RNA polymerase which is responsible for replication and transcription of virus RNA segments. The transcription of viral mRNAs occurs by a unique mechanism called cap-snatching. 5' methylated caps of cellular mRNAs are cleaved after 10-13 nucleotides by PA. In turn, these short capped RNAs are used as primers by PB1 for transcription of viral mRNAs. During virus replication, PB1 initiates RNA synthesis and copy vRNA into complementary RNA (cRNA) which in turn serves as a template for the production of more vRNAs. This chain is RNA-directed RNA polymerase catalytic subunit, found in Influenza A virus (strain A/Singapore/1/1957 H2N2).